The primary structure comprises 228 residues: Ribose-5-phosphate isomerase A (228 aa).

Substrate contacts are provided by residues 29–32 (TGST), 85–88 (DGAD), and 98–101 (KGGG). The active-site Proton acceptor is glutamate 107. Position 125 (lysine 125) interacts with substrate.

The protein belongs to the ribose 5-phosphate isomerase family. As to quaternary structure, homodimer.

It carries out the reaction aldehydo-D-ribose 5-phosphate = D-ribulose 5-phosphate. It participates in carbohydrate degradation; pentose phosphate pathway; D-ribose 5-phosphate from D-ribulose 5-phosphate (non-oxidative stage): step 1/1. In terms of biological role, catalyzes the reversible conversion of ribose-5-phosphate to ribulose 5-phosphate. This is Ribose-5-phosphate isomerase A from Staphylococcus aureus (strain COL).